Here is a 601-residue protein sequence, read N- to C-terminus: ATP-dependent lipid A-core flippase (601 aa).

The next 4 helical transmembrane spans lie at 26–46 (VGLF…QPML), 82–102 (LMIV…NYFL), 167–187 (VFLF…MVAI), and 263–283 (VYTP…LFLV). Residues 30–321 (AVSILGYVIF…LSEVSSTIQR (292 aa)) enclose the ABC transmembrane type-1 domain. Residues 353-589 (IEVRDLSFRY…GGHYARLHAM (237 aa)) enclose the ABC transporter domain. Residue 387 to 394 (GRSGSGKS) participates in ATP binding.

Belongs to the ABC transporter superfamily. Lipid exporter (TC 3.A.1.106) family. Homodimer.

The protein localises to the cell inner membrane. It carries out the reaction ATP + H2O + lipid A-core oligosaccharideSide 1 = ADP + phosphate + lipid A-core oligosaccharideSide 2.. Its function is as follows. Involved in lipopolysaccharide (LPS) biosynthesis. Translocates lipid A-core from the inner to the outer leaflet of the inner membrane. Transmembrane domains (TMD) form a pore in the inner membrane and the ATP-binding domain (NBD) is responsible for energy generation. This chain is ATP-dependent lipid A-core flippase, found in Aromatoleum aromaticum (strain DSM 19018 / LMG 30748 / EbN1) (Azoarcus sp. (strain EbN1)).